A 203-amino-acid polypeptide reads, in one-letter code: Small ribosomal subunit protein uS4 (203 aa).

The region spanning 93-156 (QRLDNVVFRL…MKVPAILEAV (64 aa)) is the S4 RNA-binding domain.

Belongs to the universal ribosomal protein uS4 family. Part of the 30S ribosomal subunit. Contacts protein S5. The interaction surface between S4 and S5 is involved in control of translational fidelity.

In terms of biological role, one of the primary rRNA binding proteins, it binds directly to 16S rRNA where it nucleates assembly of the body of the 30S subunit. Its function is as follows. With S5 and S12 plays an important role in translational accuracy. The polypeptide is Small ribosomal subunit protein uS4 (Lactococcus lactis subsp. lactis (strain IL1403) (Streptococcus lactis)).